The sequence spans 429 residues: GTPase Obg (429 aa).

In terms of domain architecture, Obg spans 1-158 (MLIDKCTLFL…IEAQFELKYI (158 aa)). In terms of domain architecture, OBG-type G spans 159-330 (ADVGLLGLPN…LLKDIFKDYK (172 aa)). Residues 165–172 (GLPNAGKS), 190–194 (FTTLS), 211–214 (DIPG), 281–284 (NKID), and 311–313 (SGF) contribute to the GTP site. Ser172 and Thr192 together coordinate Mg(2+). The OCT domain occupies 351 to 429 (KVEKEQEDIV…RIQDVMFEIN (79 aa)).

Belongs to the TRAFAC class OBG-HflX-like GTPase superfamily. OBG GTPase family. Monomer. Mg(2+) serves as cofactor.

It is found in the cytoplasm. An essential GTPase which binds GTP, GDP and possibly (p)ppGpp with moderate affinity, with high nucleotide exchange rates and a fairly low GTP hydrolysis rate. Plays a role in control of the cell cycle, stress response, ribosome biogenesis and in those bacteria that undergo differentiation, in morphogenesis control. In Malacoplasma penetrans (strain HF-2) (Mycoplasma penetrans), this protein is GTPase Obg.